Here is a 738-residue protein sequence, read N- to C-terminus: MADTQYILPNDIGVSSLDCREAFRLLSPTERLYAHHLSRAAWYGGLAVLLQTSPEAPYIYALLSRLFRAQDPDQLRQHALAEGLTEEEYQAFLVYAAGVYSNMGNYKSFGDTKFVPNLPKEKLERVILGSKAAQQHPEEVRSLWQTCGELMFSLEPRLRHLGLGKEGVTTYFSGDCAMEDAKLAQDFLDSQNLSAYNTRLFKVVGQEGKYHYEVRLASVLNTEPALDSELTSKLKSYEFQGNHFQVTRGDYAPILQKVVEHLEKAKAYAANSHQEQMLAQYVESFTQGSIEAHKRGSRFWIQDKGPIVESYIGFIESYRDPFGSRGEFEGFVAMVNKDMSAKFERLVASAEQLLKELPWPPAFEKDKFLTPDFTSLDVLTFAGSGIPAGINIPNYDDLRQTEGFKNVSLGNVLAVAYATKREKLTFMEEEDKDLYIRWKGPSFDVQVGLHELLGHGSGKLFVQDEKGAFNFDQETVINPETGEQIQSWYRSGETWDSKFSTIASSYEECRAESVGLYLCLNPQVLQIFGFEGTDAEDVIYVNWLNMVRAGLLALEFYTPETANWRQAHMQARFVILRVLLEAGEGLVTVTPTTGSDGRPDARVHLDRSKIRSVGKPALERFLRRLQVLKSTGDVVAGRALYEGYAAVTDAPPECFLTLRDTVLLRKESRKLIVQPNTRLEGSEVQLVEYEASAAGLIRSFCERFPEDGPELEEVLTQLATADAQFWRDQVQEAPSGQA.

Ala-2 carries the N-acetylalanine modification. His-450 provides a ligand contact to Zn(2+). Glu-451 is a catalytic residue. Zn(2+)-binding residues include His-455 and Glu-508.

Belongs to the peptidase M49 family. Zn(2+) is required as a cofactor.

It is found in the cytoplasm. It carries out the reaction Release of an N-terminal dipeptide from a peptide comprising four or more residues, with broad specificity. Also acts on dipeptidyl 2-naphthylamides.. Its activity is regulated as follows. Inhibited by spinorphin, an opioid peptide derived from hemoglobin. Its function is as follows. Cleaves and degrades bioactive peptides, including angiotensin, Leu-enkephalin and Met-enkephalin. Also cleaves Arg-Arg-beta-naphthylamide. The polypeptide is Dipeptidyl peptidase 3 (Dpp3) (Rattus norvegicus (Rat)).